Consider the following 422-residue polypeptide: UDP-N-acetylglucosamine 1-carboxyvinyltransferase (422 aa).

Residue 22–23 participates in phosphoenolpyruvate binding; the sequence is KN. Residue arginine 95 coordinates UDP-N-acetyl-alpha-D-glucosamine. Cysteine 119 functions as the Proton donor in the catalytic mechanism. Residue cysteine 119 is modified to 2-(S-cysteinyl)pyruvic acid O-phosphothioketal. UDP-N-acetyl-alpha-D-glucosamine is bound by residues 124–128, aspartate 309, and valine 331; that span reads RPIDQ.

It belongs to the EPSP synthase family. MurA subfamily.

The protein localises to the cytoplasm. The enzyme catalyses phosphoenolpyruvate + UDP-N-acetyl-alpha-D-glucosamine = UDP-N-acetyl-3-O-(1-carboxyvinyl)-alpha-D-glucosamine + phosphate. It participates in cell wall biogenesis; peptidoglycan biosynthesis. Its function is as follows. Cell wall formation. Adds enolpyruvyl to UDP-N-acetylglucosamine. This Anaeromyxobacter sp. (strain Fw109-5) protein is UDP-N-acetylglucosamine 1-carboxyvinyltransferase.